The following is a 476-amino-acid chain: Serine--tRNA ligase (476 aa).

279 to 281 (TAE) contributes to the L-serine binding site. 310-312 (RAE) serves as a coordination point for ATP. L-serine is bound at residue glutamate 333. 400–403 (EISS) is a binding site for ATP. An L-serine-binding site is contributed by serine 435.

This sequence belongs to the class-II aminoacyl-tRNA synthetase family. Type-1 seryl-tRNA synthetase subfamily. As to quaternary structure, homodimer. The tRNA molecule binds across the dimer.

The protein resides in the cytoplasm. The enzyme catalyses tRNA(Ser) + L-serine + ATP = L-seryl-tRNA(Ser) + AMP + diphosphate + H(+). It catalyses the reaction tRNA(Sec) + L-serine + ATP = L-seryl-tRNA(Sec) + AMP + diphosphate + H(+). It functions in the pathway aminoacyl-tRNA biosynthesis; selenocysteinyl-tRNA(Sec) biosynthesis; L-seryl-tRNA(Sec) from L-serine and tRNA(Sec): step 1/1. Functionally, catalyzes the attachment of serine to tRNA(Ser). Is also able to aminoacylate tRNA(Sec) with serine, to form the misacylated tRNA L-seryl-tRNA(Sec), which will be further converted into selenocysteinyl-tRNA(Sec). The polypeptide is Serine--tRNA ligase (Rhodopseudomonas palustris (strain BisA53)).